We begin with the raw amino-acid sequence, 580 residues long: MYLLTINYSLQCKHYTKSNKKLYIAKIMTEFYRAPEIFRQNAIIVKKSRRDISDDENSTIVRRNCKIEASKLNSSLLRKVSGDLNDVIVTKKLKTDCWKLSEDTRDVTSMSLDRDTILLSTSQTSDNLQLFQLRNNEINEQARGGKLLHSLQTITVPGKSILATDIMQSQNNDTVVSFDDKVHDRILLSGHSDGYVNLIATSIENGNAKILRRFNHSKHLKVITDSMDSVDLATQIYNTSRSKPIRHLKTWNKHHFTSVINDSLFVYDVNQQCKDPLYLNSFPGLEHVDVNPVNPFTFSLTGTKFGQSGIALLDLRLGDGNGIRVPGPQDSNAESGKCYTSKWLDEYTVVNSVGKALKIWDIRYGKVRAHLLGHNGHVNSLDYDNEMKKIYSTDDQGLIMSWDIKDLKFTDQVMCCRPSHGIQSFGLPADCVQNGNIIQSPDLERIGNKKHLGSHFVGLADSHFISLQDQELRSYSVVDMPMVLPPPRNPLRLLESVSTETKSEPPATMVYSSSDETTKDSSNSAFEDSEDTLEYEAHSPMTPALDSMFDGKTHSFDIPTIPLLSGIRRGSDATFVCEGL.

WD repeat units follow at residues 102 to 141, 170 to 209, 222 to 261, 333 to 370, and 373 to 412; these read EDTRDVTSMSLDRDTILLSTSQTSDNLQLFQLRNNEINEQ, QNNDTVVSFDDKVHDRILLSGHSDGYVNLIATSIENGNAK, VITDSMDSVDLATQIYNTSRSKPIRHLKTWNKHHFTSVIN, AESGKCYTSKWLDEYTVVNSVGKALKIWDIRYGKVRAH, and GHNGHVNSLDYDNEMKKIYSTDDQGLIMSWDIKDLKFTDQ. The segment at 497–534 is disordered; that stretch reads VSTETKSEPPATMVYSSSDETTKDSSNSAFEDSEDTLE. Positions 510 to 526 are enriched in polar residues; the sequence is VYSSSDETTKDSSNSAF.

Belongs to the WD repeat DSE1 family.

Its function is as follows. Involved in cell wall metabolism and required for the separation of the mother and daughter cells. The sequence is that of Protein DSE1 (DSE1) from Kluyveromyces lactis (strain ATCC 8585 / CBS 2359 / DSM 70799 / NBRC 1267 / NRRL Y-1140 / WM37) (Yeast).